The chain runs to 197 residues: Cytochrome c oxidase polypeptide 5, mitochondrial (197 aa).

The transit peptide at 1 to 13 (MFLRSVTRAAARS) directs the protein to the mitochondrion. Residues 14–129 (SAVPTTGLRS…KGENLKIFFK (116 aa)) are Mitochondrial matrix-facing. A helical transmembrane segment spans residues 130 to 147 (VAQLTLVSFGIFYVIHLF). The Mitochondrial intermembrane segment spans residues 148–197 (AKPQPKTMTKEWQEASNEYAKQEKINPIYGISAEGYEGKGFVQSPPAEKQ).

It belongs to the cytochrome c oxidase IV family. In terms of assembly, component of the cytochrome c oxidase (complex IV, CIV), a multisubunit enzyme composed of a catalytic core of 3 subunits and seevral supernumerary subunits. The complex exists as a monomer or a dimer and forms supercomplexes (SCs) in the inner mitochondrial membrane with ubiquinol-cytochrome c oxidoreductase (cytochrome b-c1 complex, complex III, CIII).

The protein resides in the mitochondrion inner membrane. The protein operates within energy metabolism; oxidative phosphorylation. Its function is as follows. Component of the cytochrome c oxidase, the last enzyme in the mitochondrial electron transport chain which drives oxidative phosphorylation. The respiratory chain contains 3 multisubunit complexes succinate dehydrogenase (complex II, CII), ubiquinol-cytochrome c oxidoreductase (cytochrome b-c1 complex, complex III, CIII) and cytochrome c oxidase (complex IV, CIV), that cooperate to transfer electrons derived from NADH and succinate to molecular oxygen, creating an electrochemical gradient over the inner membrane that drives transmembrane transport and the ATP synthase. Cytochrome c oxidase is the component of the respiratory chain that catalyzes the reduction of oxygen to water. Electrons originating from reduced cytochrome c in the intermembrane space (IMS) are transferred via the dinuclear copper A center (CU(A)) of subunit 2 and heme A of subunit 1 to the active site in subunit 1, a binuclear center (BNC) formed by heme A3 and copper B (CU(B)). The BNC reduces molecular oxygen to 2 water molecules using 4 electrons from cytochrome c in the IMS and 4 protons from the mitochondrial matrix. In Aspergillus niger, this protein is Cytochrome c oxidase polypeptide 5, mitochondrial (cox5).